The following is a 521-amino-acid chain: Protein translocase subunit SecD (521 aa).

Transmembrane regions (helical) follow at residues 8-28 (LKLA…LPNG), 359-379 (AGIL…VLFY), 388-408 (IALL…EATL), 410-430 (LPGM…NILI), 459-479 (IVDS…FGTG), and 483-503 (GFAL…LLLS).

The protein belongs to the SecD/SecF family. SecD subfamily. In terms of assembly, forms a complex with SecF. Part of the essential Sec protein translocation apparatus which comprises SecA, SecYEG and auxiliary proteins SecDF-YajC and YidC.

It is found in the cell inner membrane. In terms of biological role, part of the Sec protein translocase complex. Interacts with the SecYEG preprotein conducting channel. SecDF uses the proton motive force (PMF) to complete protein translocation after the ATP-dependent function of SecA. This chain is Protein translocase subunit SecD, found in Acetobacter pasteurianus (strain NBRC 105184 / IFO 3283-01).